Reading from the N-terminus, the 185-residue chain is Prenylated Rab acceptor protein 1 (185 aa).

Topologically, residues 1-78 are cytoplasmic; that stretch reads MAAQKDQQKD…RNVEYYQSNY (78 aa). Residues 30 to 54 are required for interaction with prenylated RAB3A and VAMP2; sequence AGREWLERRRATIRPWGSFVDQRRF. The next 2 helical transmembrane spans lie at 79-94 and 95-112; these read VFVF…VTSP and MLLV…ILYL. Over 113 to 131 the chain is Cytoplasmic; that stretch reads RTLQSKFVLFGREVSPAHQ. Transmembrane regions (helical) follow at residues 132 to 148 and 149 to 165; these read YALA…LAGA and GSAV…VIGS. The segment at 165–185 is required for interaction with GDI1; it reads SHAAFHQIEAVDGEELQMEPV. Residues 166 to 185 lie on the Cytoplasmic side of the membrane; that stretch reads HAAFHQIEAVDGEELQMEPV. Positions 175–185 are required for interaction with prenylated RAB3A and VAMP2; that stretch reads VDGEELQMEPV. Positions 175–185 are homodimerization; the sequence is VDGEELQMEPV.

The protein belongs to the PRA1 family. In terms of assembly, homodimer. Interacts with VAMP2 (synaptobrevin-2), prenylated Rab proteins, GDI1, NRDG1 and PCLO.

It is found in the cell membrane. The protein resides in the cytoplasm. The protein localises to the golgi apparatus. It localises to the cytoplasmic vesicle. Its subcellular location is the secretory vesicle. It is found in the synaptic vesicle. Its function is as follows. General Rab protein regulator required for vesicle formation from the Golgi complex. May control vesicle docking and fusion by mediating the action of Rab GTPases to the SNARE complexes. In addition it inhibits the removal of Rab GTPases from the membrane by GDI1. The polypeptide is Prenylated Rab acceptor protein 1 (RABAC1) (Sus scrofa (Pig)).